Reading from the N-terminus, the 267-residue chain is Eukaryotic translation initiation factor 3 subunit K (267 aa).

A PCI domain is found at 46–233; the sequence is FDCYANLALL…EARSEVKSER (188 aa).

This sequence belongs to the eIF-3 subunit K family. As to quaternary structure, component of the eukaryotic translation initiation factor 3 (eIF-3) complex.

It localises to the cytoplasm. Its function is as follows. Component of the eukaryotic translation initiation factor 3 (eIF-3) complex, which is involved in protein synthesis of a specialized repertoire of mRNAs and, together with other initiation factors, stimulates binding of mRNA and methionyl-tRNAi to the 40S ribosome. The eIF-3 complex specifically targets and initiates translation of a subset of mRNAs involved in cell proliferation. This Aspergillus niger (strain ATCC MYA-4892 / CBS 513.88 / FGSC A1513) protein is Eukaryotic translation initiation factor 3 subunit K.